The chain runs to 216 residues: Small ribosomal subunit protein uS4 (216 aa).

Residues 111–175 enclose the S4 RNA-binding domain; the sequence is RRLQTQVLRL…SPLVSESHPE (65 aa). The segment at 194 to 216 is disordered; sequence VAEAKQAKEKPPERGGRKRRGRR. Basic and acidic residues predominate over residues 198-208; that stretch reads KQAKEKPPERG.

This sequence belongs to the universal ribosomal protein uS4 family. Part of the 30S ribosomal subunit. Contacts protein S5. The interaction surface between S4 and S5 is involved in control of translational fidelity.

Functionally, one of the primary rRNA binding proteins, it binds directly to 16S rRNA where it nucleates assembly of the body of the 30S subunit. In terms of biological role, with S5 and S12 plays an important role in translational accuracy. The chain is Small ribosomal subunit protein uS4 from Methanosarcina barkeri (strain Fusaro / DSM 804).